The chain runs to 412 residues: DNA polymerase IV 2 (412 aa).

The 186-residue stretch at 7–192 (IFLVDMQSFY…LPVGSMFGVG (186 aa)) folds into the UmuC domain. Mg(2+)-binding residues include Asp-11 and Asp-107. Glu-108 is an active-site residue.

It belongs to the DNA polymerase type-Y family. As to quaternary structure, monomer. The cofactor is Mg(2+).

It localises to the cytoplasm. It carries out the reaction DNA(n) + a 2'-deoxyribonucleoside 5'-triphosphate = DNA(n+1) + diphosphate. Its function is as follows. Poorly processive, error-prone DNA polymerase involved in untargeted mutagenesis. Copies undamaged DNA at stalled replication forks, which arise in vivo from mismatched or misaligned primer ends. These misaligned primers can be extended by PolIV. Exhibits no 3'-5' exonuclease (proofreading) activity. May be involved in translesion synthesis (TSL), in conjunction with the beta clamp from PolIII. The protein is DNA polymerase IV 2 (dinB2) of Bacillus subtilis (strain 168).